The following is a 244-amino-acid chain: tRNA (guanine-N(7)-)-methyltransferase (244 aa).

S-adenosyl-L-methionine is bound by residues Glu75, Glu100, Asp127, and Asp150. The active site involves Asp150. Substrate contacts are provided by residues Lys154, Asp186, and 223 to 226 (TRFE).

It belongs to the class I-like SAM-binding methyltransferase superfamily. TrmB family.

The enzyme catalyses guanosine(46) in tRNA + S-adenosyl-L-methionine = N(7)-methylguanosine(46) in tRNA + S-adenosyl-L-homocysteine. It functions in the pathway tRNA modification; N(7)-methylguanine-tRNA biosynthesis. Its function is as follows. Catalyzes the formation of N(7)-methylguanine at position 46 (m7G46) in tRNA. This is tRNA (guanine-N(7)-)-methyltransferase from Xylella fastidiosa (strain 9a5c).